A 78-amino-acid polypeptide reads, in one-letter code: Exodeoxyribonuclease 7 small subunit (78 aa).

It belongs to the XseB family. In terms of assembly, heterooligomer composed of large and small subunits.

It is found in the cytoplasm. The catalysed reaction is Exonucleolytic cleavage in either 5'- to 3'- or 3'- to 5'-direction to yield nucleoside 5'-phosphates.. Bidirectionally degrades single-stranded DNA into large acid-insoluble oligonucleotides, which are then degraded further into small acid-soluble oligonucleotides. The chain is Exodeoxyribonuclease 7 small subunit from Finegoldia magna (strain ATCC 29328 / DSM 20472 / WAL 2508) (Peptostreptococcus magnus).